The chain runs to 444 residues: Deoxyguanosinetriphosphate triphosphohydrolase-like protein (444 aa).

Residues 1-26 (MTESLWHERRLTEEKKRRNDHRSPYQ) form a disordered region. An HD domain is found at 59–250 (RLTHSLEVSQ…MELADDIAYA (192 aa)).

This sequence belongs to the dGTPase family. Type 2 subfamily.

This is Deoxyguanosinetriphosphate triphosphohydrolase-like protein from Shewanella sediminis (strain HAW-EB3).